The sequence spans 227 residues: Cytochrome c oxidase subunit 2 (227 aa).

The Mitochondrial intermembrane portion of the chain corresponds to 1–14 (MAHPVQLGLQDATS). A helical transmembrane segment spans residues 15 to 45 (PVMEELITFHDYALMTISLISFLVLYALFST). Residues 46–59 (LTTKLTNTNITDAQ) lie on the Mitochondrial matrix side of the membrane. A helical transmembrane segment spans residues 60–87 (EMETTWTILPAVILILIALPSLRILYLT). Over 88–227 (DEINNPSFTI…IFEMGPVFTL (140 aa)) the chain is Mitochondrial intermembrane. 6 residues coordinate Cu cation: H161, C196, E198, C200, H204, and M207. Position 198 (E198) interacts with Mg(2+).

The protein belongs to the cytochrome c oxidase subunit 2 family. Component of the cytochrome c oxidase (complex IV, CIV), a multisubunit enzyme composed of 14 subunits. The complex is composed of a catalytic core of 3 subunits MT-CO1, MT-CO2 and MT-CO3, encoded in the mitochondrial DNA, and 11 supernumerary subunits COX4I, COX5A, COX5B, COX6A, COX6B, COX6C, COX7A, COX7B, COX7C, COX8 and NDUFA4, which are encoded in the nuclear genome. The complex exists as a monomer or a dimer and forms supercomplexes (SCs) in the inner mitochondrial membrane with NADH-ubiquinone oxidoreductase (complex I, CI) and ubiquinol-cytochrome c oxidoreductase (cytochrome b-c1 complex, complex III, CIII), resulting in different assemblies (supercomplex SCI(1)III(2)IV(1) and megacomplex MCI(2)III(2)IV(2)). Found in a complex with TMEM177, COA6, COX18, COX20, SCO1 and SCO2. Interacts with TMEM177 in a COX20-dependent manner. Interacts with COX20. Interacts with COX16. Cu cation is required as a cofactor.

Its subcellular location is the mitochondrion inner membrane. It catalyses the reaction 4 Fe(II)-[cytochrome c] + O2 + 8 H(+)(in) = 4 Fe(III)-[cytochrome c] + 2 H2O + 4 H(+)(out). In terms of biological role, component of the cytochrome c oxidase, the last enzyme in the mitochondrial electron transport chain which drives oxidative phosphorylation. The respiratory chain contains 3 multisubunit complexes succinate dehydrogenase (complex II, CII), ubiquinol-cytochrome c oxidoreductase (cytochrome b-c1 complex, complex III, CIII) and cytochrome c oxidase (complex IV, CIV), that cooperate to transfer electrons derived from NADH and succinate to molecular oxygen, creating an electrochemical gradient over the inner membrane that drives transmembrane transport and the ATP synthase. Cytochrome c oxidase is the component of the respiratory chain that catalyzes the reduction of oxygen to water. Electrons originating from reduced cytochrome c in the intermembrane space (IMS) are transferred via the dinuclear copper A center (CU(A)) of subunit 2 and heme A of subunit 1 to the active site in subunit 1, a binuclear center (BNC) formed by heme A3 and copper B (CU(B)). The BNC reduces molecular oxygen to 2 water molecules using 4 electrons from cytochrome c in the IMS and 4 protons from the mitochondrial matrix. This chain is Cytochrome c oxidase subunit 2 (MT-CO2), found in Chlorocebus aethiops (Green monkey).